Consider the following 72-residue polypeptide: Translation initiation factor IF-1 (72 aa).

The S1-like domain maps to 1-72; the sequence is MAKEGAIEVE…TRGRIVYRYK (72 aa).

It belongs to the IF-1 family. As to quaternary structure, component of the 30S ribosomal translation pre-initiation complex which assembles on the 30S ribosome in the order IF-2 and IF-3, IF-1 and N-formylmethionyl-tRNA(fMet); mRNA recruitment can occur at any time during PIC assembly.

It is found in the cytoplasm. In terms of biological role, one of the essential components for the initiation of protein synthesis. Stabilizes the binding of IF-2 and IF-3 on the 30S subunit to which N-formylmethionyl-tRNA(fMet) subsequently binds. Helps modulate mRNA selection, yielding the 30S pre-initiation complex (PIC). Upon addition of the 50S ribosomal subunit IF-1, IF-2 and IF-3 are released leaving the mature 70S translation initiation complex. In Corynebacterium diphtheriae (strain ATCC 700971 / NCTC 13129 / Biotype gravis), this protein is Translation initiation factor IF-1.